The primary structure comprises 500 residues: FAD-linked oxidoreductase easE (500 aa).

Residues 37 to 220 (QGRIPLFTVG…TRATMRVFPD (184 aa)) form the FAD-binding PCMH-type domain.

This sequence belongs to the oxygen-dependent FAD-linked oxidoreductase family. The cofactor is FAD.

The protein operates within alkaloid biosynthesis; ergot alkaloid biosynthesis. Functionally, FAD-linked oxidoreductase; part of the gene cluster that mediates the biosynthesis of fungal ergot alkaloid. DmaW catalyzes the first step of ergot alkaloid biosynthesis by condensing dimethylallyl diphosphate (DMAP) and tryptophan to form 4-dimethylallyl-L-tryptophan. The second step is catalyzed by the methyltransferase easF that methylates 4-dimethylallyl-L-tryptophan in the presence of S-adenosyl-L-methionine, resulting in the formation of 4-dimethylallyl-L-abrine. The catalase easC and the FAD-dependent oxidoreductase easE then transform 4-dimethylallyl-L-abrine to chanoclavine-I which is further oxidized by easD in the presence of NAD(+), resulting in the formation of chanoclavine-I aldehyde. Chanoclavine-I aldehyde is the precursor of ergoamides and ergopeptines in Clavicipitaceae, and clavine-type alcaloids such as fumiclavine in Trichocomaceae. However, the metabolites downstream of chanoclavine-I aldehyde in Arthrodermataceae have not been identified yet. The chain is FAD-linked oxidoreductase easE from Arthroderma benhamiae (strain ATCC MYA-4681 / CBS 112371) (Trichophyton mentagrophytes).